The following is an 889-amino-acid chain: Oxysterol-binding protein-related protein 8 (889 aa).

An N-acetylmethionine modification is found at methionine 1. A disordered region spans residues 1-129; the sequence is MEGGLADGEP…SLKVQKKNYR (129 aa). A Phosphoserine modification is found at serine 14. Composition is skewed to polar residues over residues 28 to 46 and 62 to 71; these read VVAN…MSQR and PSLSPASPHS. Phosphoserine is present on residues serine 65 and serine 68. Basic and acidic residues-rich tracts occupy residues 73-88, 95-109, and 116-129; these read GFER…KDES, SKSE…EKDS, and TKKE…KNYR. Positions 148 to 265 constitute a PH domain; it reads VIVMADWLKI…WMDALELALK (118 aa). Phosphoserine occurs at positions 314, 328, and 342. A compositionally biased stretch (basic and acidic residues) spans 322–336; that stretch reads KDQDMYSDKSDKEND. The segment at 322–399 is disordered; sequence KDQDMYSDKS…AGEASQTETV (78 aa). A compositionally biased stretch (basic and acidic residues) spans 346 to 363; that stretch reads VMGKSEESDTDTSERQDD. A 1,2-diacyl-sn-glycero-3-phospho-(1D-myo-inositol 4-phosphate) is bound by residues 420–425, 482–485, and 514–515; these read LSKVVL, KPYN, and HH. Residues 420–425 and asparagine 485 each bind a 1,2-diacyl-sn-glycero-3-phospho-L-serine; that span reads LSKVVL. Serine 540 lines the a 1,2-diacyl-sn-glycero-3-phospho-L-serine pocket. A 1,2-diacyl-sn-glycero-3-phospho-(1D-myo-inositol 4-phosphate) is bound by residues lysine 706, glutamate 710, and arginine 714. Residues 771 to 823 are disordered; that stretch reads KHRTPMVSVPKMKHKPTRQQKKVAKGYSSPEPDIQDSSGSEAQSVKPSTRRKK. Basic residues predominate over residues 781–794; it reads KMKHKPTRQQKKVA. Polar residues predominate over residues 805 to 817; it reads QDSSGSEAQSVKP. A phosphoserine mark is found at serine 807, serine 808, serine 810, and serine 814. The helical transmembrane segment at 871-888 threads the bilayer; sequence YFIIFLLILLQVIINFMF.

This sequence belongs to the OSBP family. As to quaternary structure, interacts with SPAG5. Interacts with NUP62. Widely expressed. Expressed at higher level in macrophages.

It localises to the endoplasmic reticulum membrane. The protein resides in the nucleus membrane. Lipid transporter involved in lipid countertransport between the endoplasmic reticulum and the plasma membrane: specifically exchanges phosphatidylserine with phosphatidylinositol 4-phosphate (PI4P), delivering phosphatidylserine to the plasma membrane in exchange for PI4P, which is degraded by the SAC1/SACM1L phosphatase in the endoplasmic reticulum. Binds phosphatidylserine and PI4P in a mutually exclusive manner. Binds oxysterol, 25-hydroxycholesterol and cholesterol. This is Oxysterol-binding protein-related protein 8 (OSBPL8) from Homo sapiens (Human).